The following is a 623-amino-acid chain: Phosphatidylinositol-3-phosphatase SAC1 (623 aa).

Over 1–523 (MTGPIVYVQN…SPFPDRRPVY (523 aa)) the chain is Cytoplasmic. The region spanning 115–454 (LELHLKNSTF…ADAVSVAYSG (340 aa)) is the SAC domain. Residues Lys-246 and Lys-358 each participate in a glycyl lysine isopeptide (Lys-Gly) (interchain with G-Cter in ubiquitin) cross-link. The chain crosses the membrane as a helical span at residues 524–544 (IQLIPMIICAALTVLGATIFF). Residues 545 to 552 (PKDRFTSS) are Lumenal-facing. The chain crosses the membrane as a helical span at residues 553–573 (KNLLYFAGASIVLALSTKFMF). The Cytoplasmic portion of the chain corresponds to 574-623 (KNGIQFVNWPKLVDVGFLVVHQTHDKEQQFKGLKYAQSPKFSKPDPLKRD).

In terms of assembly, component of the SPOTS complex, at least composed of LCB1/2 (LCB1 and/or LCB2), ORM1/2 (ORM1 and/or ORM2), SAC1 and TSC3.

The protein localises to the endoplasmic reticulum membrane. The protein resides in the golgi apparatus membrane. The catalysed reaction is a 1,2-diacyl-sn-glycero-3-phospho-(1D-myo-inositol-3-phosphate) + H2O = a 1,2-diacyl-sn-glycero-3-phospho-(1D-myo-inositol) + phosphate. The enzyme catalyses a 1,2-diacyl-sn-glycero-3-phospho-(1D-myo-inositol 4-phosphate) + H2O = a 1,2-diacyl-sn-glycero-3-phospho-(1D-myo-inositol) + phosphate. Its function is as follows. Phosphoinositide phosphatase which catalyzes the hydrolysis of phosphatidylinositol 3-phosphate (PtdIns(3)P) and phosphatidylinositol 4-phosphate (PtdIns(4)P). Has low activity towards phosphatidylinositol-3,5-bisphosphate (PtdIns(3,5)P2). May be involved in the coordination of the activities of the secretory pathway and the actin cytoskeleton. This Saccharomyces cerevisiae (strain ATCC 204508 / S288c) (Baker's yeast) protein is Phosphatidylinositol-3-phosphatase SAC1 (SAC1).